The following is a 205-amino-acid chain: Heme ligase (205 aa).

In terms of domain architecture, FAS1 spans 48–203 (KRTIINLIYS…GVVHIVDKPI (156 aa)). The required for binding to host hemoglobin stretch occupies residues 154–172 (LRNLLNNDLIVKIEGEFKH). 2 heme binding domain regions span residues 171-181 (KHCNHSIYLNG) and 191-200 (CHNGVVHIVD).

As to quaternary structure, component of the hemozoin formation complex (HFC) composed of falcipains FP2A and/or FP2B, plasmepsins PMII, PMIII/HAP and PMIV, heme detoxifying protein HDP and falcilysin FLN. The HFC complex is involved in hemoglobin degradation and detoxification of heme in the food vacuole during the asexual blood stage. Interacts with falcipain 2; the interaction is direct and enhances HDP catalytic activity. Interacts with host hemoglobin.

It localises to the vacuole. Its subcellular location is the host cytoplasm. The protein localises to the host cytosol. The enzyme catalyses 2 Fe(III)-heme b = beta-hematin. Heme detoxifying enzyme that converts heme to crystalline hemozoin (beta-hematin) to protect the organism from the toxic effects of heme. During its development, P.falciparum proteolyzes vast amounts of host hemoglobin, leading to heme release. The polypeptide is Heme ligase (Plasmodium falciparum (isolate 3D7)).